The chain runs to 178 residues: Protein modigliani (178 aa).

As to quaternary structure, probably homodimerizes. Component of the MTV complex, composed of moi/modigliani, tea and ver/verrocchio. Interacts with ver/verrochio and tea (via C-terminus); the interactions are direct and require fully intact moi/modigliani and ver/verrocchio. The MTV complex is recruited to telomeres by the HipHop-HOAP complex, consisting of HipHop, cav/HOAP and Su(var)205/HP1 to form the terminin telomere-capping complex. Interacts with cav/HOAP and Su(var)205/HP1; the interactions are direct. Probably interacts with peo (via N-terminus and UBC domain).

Its subcellular location is the nucleus. The protein localises to the chromosome. The protein resides in the telomere. In terms of biological role, part of the MTV complex that associates with the HipHop-HOAP complex to form the terminin telomere-capping complex involved in telomere maintenance and prevention of telomere fusion. Potentially functions downstream of mei-41/ATR. As part of the MTV complex binds single stranded DNA in a sequence-independent manner, protecting it from degradation. In Drosophila melanogaster (Fruit fly), this protein is Protein modigliani.